The following is a 338-amino-acid chain: Ketol-acid reductoisomerase (NADP(+)) (338 aa).

Residues 1–181 (MKVYYDKDAD…GGGRTGIIET (181 aa)) enclose the KARI N-terminal Rossmann domain. Residues 24-27 (YGSQ), arginine 47, serine 50, serine 52, and 82-85 (DEFQ) contribute to the NADP(+) site. Histidine 107 is an active-site residue. Glycine 133 is an NADP(+) binding site. Residues 182 to 327 (TFKDETETDL…AKLRSMMPWI (146 aa)) form the KARI C-terminal knotted domain. The Mg(2+) site is built by aspartate 190, glutamate 194, glutamate 226, and glutamate 230. Serine 251 contacts substrate.

This sequence belongs to the ketol-acid reductoisomerase family. Requires Mg(2+) as cofactor.

The catalysed reaction is (2R)-2,3-dihydroxy-3-methylbutanoate + NADP(+) = (2S)-2-acetolactate + NADPH + H(+). It carries out the reaction (2R,3R)-2,3-dihydroxy-3-methylpentanoate + NADP(+) = (S)-2-ethyl-2-hydroxy-3-oxobutanoate + NADPH + H(+). Its pathway is amino-acid biosynthesis; L-isoleucine biosynthesis; L-isoleucine from 2-oxobutanoate: step 2/4. The protein operates within amino-acid biosynthesis; L-valine biosynthesis; L-valine from pyruvate: step 2/4. Its function is as follows. Involved in the biosynthesis of branched-chain amino acids (BCAA). Catalyzes an alkyl-migration followed by a ketol-acid reduction of (S)-2-acetolactate (S2AL) to yield (R)-2,3-dihydroxy-isovalerate. In the isomerase reaction, S2AL is rearranged via a Mg-dependent methyl migration to produce 3-hydroxy-3-methyl-2-ketobutyrate (HMKB). In the reductase reaction, this 2-ketoacid undergoes a metal-dependent reduction by NADPH to yield (R)-2,3-dihydroxy-isovalerate. This Thiobacillus denitrificans (strain ATCC 25259 / T1) protein is Ketol-acid reductoisomerase (NADP(+)).